A 1124-amino-acid chain; its full sequence is Zinc finger E-box-binding homeobox 1 (1124 aa).

Disordered stretches follow at residues methionine 1 to proline 124 and alanine 142 to proline 163. Positions asparagine 18–asparagine 30 are enriched in low complexity. Serine 31 and serine 33 each carry phosphoserine. The span at glutamate 44–proline 62 shows a compositional bias: acidic residues. Basic and acidic residues predominate over residues serine 72–glutamine 91. The segment at leucine 170–histidine 193 adopts a C2H2-type 1 zinc-finger fold. Glycyl lysine isopeptide (Lys-Gly) (interchain with G-Cter in SUMO2) cross-links involve residues lysine 186 and lysine 195. 2 C2H2-type zinc fingers span residues phenylalanine 200–histidine 222 and phenylalanine 240–histidine 262. Residues tyrosine 268 to cysteine 292 form a C2H2-type 4; atypical zinc finger. A disordered region spans residues threonine 304–glutamine 327. Residue lysine 307 forms a Glycyl lysine isopeptide (Lys-Gly) (interchain with G-Cter in SUMO2) linkage. The segment covering serine 309–serine 322 has biased composition (low complexity). Phosphoserine occurs at positions 313 and 322. Residues lysine 331 and lysine 335 each participate in a glycyl lysine isopeptide (Lys-Gly) (interchain with G-Cter in SUMO2) cross-link. A Glycyl lysine isopeptide (Lys-Gly) (interchain with G-Cter in SUMO); alternate cross-link involves residue lysine 347. Lysine 347 is covalently cross-linked (Glycyl lysine isopeptide (Lys-Gly) (interchain with G-Cter in SUMO2); alternate). Residues lysine 439, lysine 493, lysine 504, lysine 515, lysine 548, and lysine 553 each participate in a glycyl lysine isopeptide (Lys-Gly) (interchain with G-Cter in SUMO2) cross-link. 2 disordered regions span residues aspartate 551–glutamine 586 and glutamine 636–arginine 714. The segment at residues asparagine 581–glutamine 640 is a DNA-binding region (homeobox; atypical). 5 positions are modified to phosphoserine: serine 642, serine 679, serine 686, serine 693, and serine 700. A compositionally biased stretch (polar residues) spans alanine 656–proline 687. The segment covering glycine 692–arginine 714 has biased composition (low complexity). Threonine 702 carries the post-translational modification Phosphothreonine. At serine 704 the chain carries Phosphoserine. Lysine 774 participates in a covalent cross-link: Glycyl lysine isopeptide (Lys-Gly) (interchain with G-Cter in SUMO); alternate. Lysine 774 participates in a covalent cross-link: Glycyl lysine isopeptide (Lys-Gly) (interchain with G-Cter in SUMO2); alternate. The segment at proline 856–lysine 898 is disordered. The segment covering serine 874 to threonine 890 has biased composition (polar residues). 2 C2H2-type zinc fingers span residues tyrosine 904 to histidine 926 and histidine 932 to histidine 954. The segment at tyrosine 960–histidine 981 adopts a C2H2-type 7; atypical zinc-finger fold. Residues glutamate 989–alanine 1124 form a disordered region. 2 stretches are compositionally biased toward acidic residues: residues glutamate 1031–glutamate 1052 and aspartate 1062–glycine 1084. Basic and acidic residues predominate over residues glutamate 1085–glutamate 1099. Residues serine 1100–glutamine 1115 show a composition bias toward polar residues.

Belongs to the delta-EF1/ZFH-1 C2H2-type zinc-finger family. In terms of assembly, interacts (via N-terminus) with SMARCA4/BRG1. In terms of processing, ubiquitinated, leading to degradation in a proteasome-dependent manner. Deubiquitinated by USP51, leading to stabilization. In terms of tissue distribution, colocalizes with SMARCA4/BRG1 in E-cadherin-negative cells from established lines, and stroma of normal colon as well as in de-differentiated epithelial cells at the invasion front of colorectal carcinomas (at protein level). Expressed in heart and skeletal muscle, but not in liver, spleen, or pancreas.

The protein resides in the nucleus. Acts as a transcriptional repressor. Inhibits interleukin-2 (IL-2) gene expression. Enhances or represses the promoter activity of the ATP1A1 gene depending on the quantity of cDNA and on the cell type. Represses E-cadherin promoter and induces an epithelial-mesenchymal transition (EMT) by recruiting SMARCA4/BRG1. Represses BCL6 transcription in the presence of the corepressor CTBP1. Positively regulates neuronal differentiation. Represses RCOR1 transcription activation during neurogenesis. Represses transcription by binding to the E box (5'-CANNTG-3'). In the absence of TGFB1, acts as a repressor of COL1A2 transcription via binding to the E-box in the upstream enhancer region. The chain is Zinc finger E-box-binding homeobox 1 from Homo sapiens (Human).